The following is a 109-amino-acid chain: Large ribosomal subunit protein uL23 (109 aa).

The protein belongs to the universal ribosomal protein uL23 family. Part of the 50S ribosomal subunit. Contacts protein L29, and trigger factor when it is bound to the ribosome.

One of the early assembly proteins it binds 23S rRNA. One of the proteins that surrounds the polypeptide exit tunnel on the outside of the ribosome. Forms the main docking site for trigger factor binding to the ribosome. This is Large ribosomal subunit protein uL23 from Aquifex pyrophilus.